Reading from the N-terminus, the 319-residue chain is N-acetylneuraminate lyase (319 aa).

T51 and T52 together coordinate aceneuramate. Y143 acts as the Proton donor in catalysis. The active-site Schiff-base intermediate with substrate is the K173. 5 residues coordinate aceneuramate: S175, G199, D201, E202, and S218.

The protein belongs to the DapA family. NanA subfamily. Homotetramer.

It localises to the cytoplasm. It carries out the reaction aceneuramate = aldehydo-N-acetyl-D-mannosamine + pyruvate. Its pathway is amino-sugar metabolism; N-acetylneuraminate degradation. Functionally, catalyzes the cleavage of N-acetylneuraminic acid (sialic acid) to form pyruvate and N-acetylmannosamine via a Schiff base intermediate. It prevents sialic acids from being recycled and returning to the cell surface. Involved in the N-glycolylneuraminic acid (Neu5Gc) degradation pathway. The chain is N-acetylneuraminate lyase from Sus scrofa (Pig).